A 206-amino-acid chain; its full sequence is Probable N-acetyltransferase 14 (206 aa).

The region spanning Leu55 to Leu206 is the N-acetyltransferase domain. A helical membrane pass occupies residues Phe57–Met77.

This sequence belongs to the camello family.

The protein localises to the membrane. In terms of biological role, probable acetyltransferase. May act as a transcription factor regulating the expression of coproporphyrinogen oxidase by binding to a promoter regulatory element. This chain is Probable N-acetyltransferase 14, found in Bos taurus (Bovine).